The following is a 281-amino-acid chain: Protein-S-isoprenylcysteine O-methyltransferase (281 aa).

The Cytoplasmic segment spans residues 1-2 (ML). A helical membrane pass occupies residues 3 to 29 (SPAGKISLQSFTGSSLVFFVICMFNHY). At 30–35 (YGITNL) the chain is on the lumenal side. A helical membrane pass occupies residues 36–53 (VVNTLIVFFYAVNVYFFL). At 54–58 (KFFYN) the chain is on the cytoplasmic side. The helical transmembrane segment at 59–85 (EFAFAIAIRAAFLGLVLVLGLYIKLVA) threads the bilayer. The Lumenal portion of the chain corresponds to 86–88 (PPN). A helical membrane pass occupies residues 89–113 (IQIFGGYMSVMALFHYSEFLAIAIV). At 114–118 (QPKQV) the chain is on the cytoplasmic side. A helical membrane pass occupies residues 119-149 (STDSFVINHSPQYTIAAVSSWVEFFIETYFF). Over 150–155 (PGLKEI) the chain is Lumenal. A helical membrane pass occupies residues 156-181 (HWLSNIGLCVCILGEVLRKTAILTAG). Topologically, residues 182–208 (SNFNHLVQCEKSSDHVLVTHGVYAWFR) are cytoplasmic. S-adenosyl-L-methionine-binding positions include glutamine 189, 196–199 (HVLV), tyrosine 204, and 209–212 (HPSY). Residues 209–226 (HPSYVGWFYWSIGTQIIL) form a helical membrane-spanning segment. At 227–229 (INP) the chain is on the lumenal side. Residues 230–243 (LCIPAYTLASWMFF) form a helical membrane-spanning segment. At 244–281 (KERIYIEESMLLSFFGQQYCDYQQQVGTGIPFIEGYKI) the chain is on the cytoplasmic side. Arginine 246 is a substrate binding site. An S-adenosyl-L-methionine-binding site is contributed by glutamate 250.

The protein belongs to the class VI-like SAM-binding methyltransferase superfamily. Isoprenylcysteine carboxyl methyltransferase family.

It localises to the endoplasmic reticulum membrane. The enzyme catalyses [protein]-C-terminal S-[(2E,6E)-farnesyl]-L-cysteine + S-adenosyl-L-methionine = [protein]-C-terminal S-[(2E,6E)-farnesyl]-L-cysteine methyl ester + S-adenosyl-L-homocysteine. Functionally, catalyzes the post-translational methylation of isoprenylated C-terminal cysteine residues. This Tribolium castaneum (Red flour beetle) protein is Protein-S-isoprenylcysteine O-methyltransferase.